Reading from the N-terminus, the 159-residue chain is Small ribosomal subunit protein uS9 (159 aa).

It belongs to the universal ribosomal protein uS9 family.

This is Small ribosomal subunit protein uS9 from Beijerinckia indica subsp. indica (strain ATCC 9039 / DSM 1715 / NCIMB 8712).